We begin with the raw amino-acid sequence, 433 residues long: Citrate synthase, mitochondrial (433 aa).

Catalysis depends on residues His274 and His320. Position 329 (Arg329) interacts with oxaloacetate. Residue Asp375 is part of the active site. Residues Arg401 and Arg421 each contribute to the oxaloacetate site.

This sequence belongs to the citrate synthase family. As to quaternary structure, homodimer.

Its subcellular location is the mitochondrion matrix. The enzyme catalyses oxaloacetate + acetyl-CoA + H2O = citrate + CoA + H(+). It functions in the pathway carbohydrate metabolism; tricarboxylic acid cycle; isocitrate from oxaloacetate: step 1/2. Key enzyme of the Krebs tricarboxylic acid cycle which catalyzes the synthesis of citrate from acetyl coenzyme A and oxaloacetate. The chain is Citrate synthase, mitochondrial (CS) from Gallus gallus (Chicken).